The following is a 129-amino-acid chain: Large ribosomal subunit protein bL12 (129 aa).

This sequence belongs to the bacterial ribosomal protein bL12 family. As to quaternary structure, homodimer. Part of the ribosomal stalk of the 50S ribosomal subunit. Forms a multimeric L10(L12)X complex, where L10 forms an elongated spine to which 2 to 4 L12 dimers bind in a sequential fashion. Binds GTP-bound translation factors.

Its function is as follows. Forms part of the ribosomal stalk which helps the ribosome interact with GTP-bound translation factors. Is thus essential for accurate translation. The chain is Large ribosomal subunit protein bL12 from Pseudothermotoga lettingae (strain ATCC BAA-301 / DSM 14385 / NBRC 107922 / TMO) (Thermotoga lettingae).